A 179-amino-acid chain; its full sequence is Inosine/xanthosine triphosphatase (179 aa).

A Mg(2+)-binding site is contributed by Glu71. 71–72 lines the substrate pocket; the sequence is EA.

It belongs to the YjjX NTPase family. As to quaternary structure, homodimer. Mg(2+) is required as a cofactor. Mn(2+) serves as cofactor.

It carries out the reaction XTP + H2O = XDP + phosphate + H(+). It catalyses the reaction ITP + H2O = IDP + phosphate + H(+). Functionally, phosphatase that hydrolyzes non-canonical purine nucleotides such as XTP and ITP to their respective diphosphate derivatives. Probably excludes non-canonical purines from DNA/RNA precursor pool, thus preventing their incorporation into DNA/RNA and avoiding chromosomal lesions. The sequence is that of Inosine/xanthosine triphosphatase from Shewanella sp. (strain MR-4).